A 1156-amino-acid chain; its full sequence is Nitric oxide synthase, inducible (1156 aa).

Residues 23-27 (DINNN) carry the DINNN-motif; mediates interaction with SPSB1, SPSB2 and SPSB4 motif. The segment at 27–84 (NVGKFYQPPSSPVTQDDPKRHSPGKHGNESPQPLTGTVKTSPESLSKLDAPPSACPRH) is disordered. Positions 55–70 (ESPQPLTGTVKTSPES) are enriched in polar residues. Cys110 and Cys115 together coordinate Zn(2+). Ser118 provides a ligand contact to (6R)-L-erythro-5,6,7,8-tetrahydrobiopterin. Heme b is bound at residue Cys200. The L-arginine site is built by Gln263, Trp372, Tyr373, and Glu377. (6R)-L-erythro-5,6,7,8-tetrahydrobiopterin is bound by residues Arg381, Ile462, Trp463, and Phe476. Residue Tyr491 participates in heme b binding. Residues 515–535 (FKVLVKAVFFASVLMHKAMAS) form a calmodulin-binding region. Residues 539–677 (ATILFATETG…AFRSWAVQTF (139 aa)) form the Flavodoxin-like domain. FMN is bound by residues Thr545, Glu546, Thr547, Arg549, and Ser550. A Phosphotyrosine modification is found at Tyr575. FMN-binding residues include Ser591, Thr592, Ser628, Cys635, Glu661, and Gln665. The FAD-binding FR-type domain occupies 730-970 (KHVFTMRLKS…VRSASGFQLP (241 aa)). Arg750 serves as a coordination point for NADP(+). Residues His772, Arg906, Tyr908, Ser909, Thr924, and Ala926 each coordinate FAD. Residue Thr929 participates in NADP(+) binding. The FAD site is built by Tyr930, Val943, Cys944, and Ser945. NADP(+) contacts are provided by Thr984, Arg1017, Ser1046, Arg1047, Lys1053, Tyr1055, Gln1057, and Asp1090.

This sequence belongs to the NOS family. In terms of assembly, homodimer. Interacts with NHERF1. Interacts with GAPDH; induced by oxidatively-modified low-densitity lipoprotein (LDL(ox)). Interacts with S100A8 and S100A9 to form the iNOS-S100A8/9 transnitrosylase complex. Interacts with SPSB1, SPSB2 and SPSB4. Interacts with ELOC and CUL5 in the presence of SPSB1 or SPSB2 or SPSB4. Forms a complex with ASL, ASS1 and HSP90AA1; the complex regulates cell-autonomous L-arginine synthesis and citrulline recycling while channeling extracellular L-arginine to nitric oxide synthesis pathway. Requires heme b as cofactor. FAD serves as cofactor. The cofactor is FMN. It depends on (6R)-L-erythro-5,6,7,8-tetrahydrobiopterin as a cofactor. Polyubiquitinated; mediated by SPSB1, SPSB2 and SPSB4, leading to proteasomal degradation.

Its subcellular location is the cytoplasm. The protein localises to the cytosol. It catalyses the reaction 2 L-arginine + 3 NADPH + 4 O2 + H(+) = 2 L-citrulline + 2 nitric oxide + 3 NADP(+) + 4 H2O. Its activity is regulated as follows. Regulated by calcium/calmodulin. In terms of biological role, produces nitric oxide (NO) which is a messenger molecule with diverse functions throughout the body. In macrophages, NO mediates tumoricidal and bactericidal actions. Also has nitrosylase activity and mediates cysteine S-nitrosylation of cytoplasmic target proteins such PTGS2/COX2. As component of the iNOS-S100A8/9 transnitrosylase complex involved in the selective inflammatory stimulus-dependent S-nitrosylation of GAPDH implicated in regulation of the GAIT complex activity and probably multiple targets including ANXA5, EZR, MSN and VIM. Involved in inflammation, enhances the synthesis of pro-inflammatory mediators such as IL6 and IL8. This chain is Nitric oxide synthase, inducible (NOS2), found in Bos taurus (Bovine).